The chain runs to 352 residues: MTSPSSILLYCRRGFEKECAAEILVQTQAAGISGHVRAKENSAYVVFVAHEPEILANRAARLRFDALIFARQRIFASGPLADLPVDDRITPLLDTAAGLQRRYSTLWLETADTNEAKELAAFTRKFERPFAAAAAGLLGGGPQAPRLHVFFLTSTAAYLGYTLPDDSAPWPCGIPRLKLPRSAPSRSTLKLEEAFLVFVDRPETMLRPGMSAVDLGAAPGGWTWQLVRRHIRTTAVDNGNLDPALLDSGLVTHLRTDGFRFRPSRPVDWLVCDMVEQPSRIARLVADWAADGAFRYAVFNLKLPMNRRYEEVERCRGLIEERLAAQGVSHRLRFRQLYHDREEVTGFLELVS.

Residues serine 187, 218–221 (APGG), aspartate 237, aspartate 257, and aspartate 273 contribute to the S-adenosyl-L-methionine site. Lysine 302 functions as the Proton acceptor in the catalytic mechanism.

It belongs to the class I-like SAM-binding methyltransferase superfamily. RNA methyltransferase RlmE family. RlmM subfamily. In terms of assembly, monomer.

It localises to the cytoplasm. The catalysed reaction is cytidine(2498) in 23S rRNA + S-adenosyl-L-methionine = 2'-O-methylcytidine(2498) in 23S rRNA + S-adenosyl-L-homocysteine + H(+). Functionally, catalyzes the 2'-O-methylation at nucleotide C2498 in 23S rRNA. In Methylococcus capsulatus (strain ATCC 33009 / NCIMB 11132 / Bath), this protein is Ribosomal RNA large subunit methyltransferase M.